The sequence spans 324 residues: Adenine deaminase (324 aa).

Residues H11, H13, and H189 each coordinate Zn(2+). E192 acts as the Proton donor in catalysis. D270 contacts Zn(2+). D271 is a binding site for substrate.

It belongs to the metallo-dependent hydrolases superfamily. Adenosine and AMP deaminases family. Adenine deaminase type 2 subfamily. It depends on Zn(2+) as a cofactor.

The catalysed reaction is adenine + H2O + H(+) = hypoxanthine + NH4(+). Catalyzes the hydrolytic deamination of adenine to hypoxanthine. Plays an important role in the purine salvage pathway and in nitrogen catabolism. The chain is Adenine deaminase from Sinorhizobium fredii (strain NBRC 101917 / NGR234).